The primary structure comprises 367 residues: MKEPLDLSKYSVRTDLAVEAHQMLQERQEEQQGIQGVVVKEREEEGITITKVTIDEVASESMGKKPGNYLTLEVQGIRQQDTELQQKVERIFAKEFSYFLEEVGVTKEASCLIVGLGNWNVTPDALGPIVVENVLVTRHLFQLQPESVEEGFRPVSAIRPGVMGITGIETSDVIYGIIEKTKPDFVIAIDALAARSIERVNSTIQISDTGIHPGSGVGNKRKELSKETLGIPVIAIGVPTVVDAVSITSDTIDFILKHFGREMKEGNKPSRSLLPAGFTFGEKKKLTEEDMPDEKSRNMFLGAVGTLEDEEKRKLIYEVLSPLGHNLMVTPKEVDAFIEDMANVIASGLNAALHHQIDQDNTGAYTH.

The propeptide occupies 1–15 (MKEPLDLSKYSVRTD).

Belongs to the peptidase A25 family. Homotetramer. Post-translationally, autoproteolytically processed. The inactive tetrameric zymogen termed p46 autoprocesses to a smaller form termed p41, which is active only during spore germination.

The catalysed reaction is Endopeptidase action with P4 Glu or Asp, P1 preferably Glu &gt; Asp, P1' hydrophobic and P2' Ala.. Its function is as follows. Initiates the rapid degradation of small, acid-soluble proteins during spore germination. The polypeptide is Germination protease (Bacillus cereus (strain AH187)).